Reading from the N-terminus, the 524-residue chain is Zinc finger CCCH-type with G patch domain-containing protein (524 aa).

Residues 105-142 (SEESQPLGSNDETSTCSKGSEEEEEEEEEEEDNTSGMK) form a disordered region. The span at 106 to 122 (EESQPLGSNDETSTCSK) shows a compositional bias: polar residues. A compositionally biased stretch (acidic residues) spans 125-137 (EEEEEEEEEEEDN). The C3H1-type zinc-finger motif lies at 184–210 (KAMKPCPFFLDGKCLFNDNCRFSHGQV). The interval 279-298 (RGSDSSSSSSSDEEEDGAAE) is disordered. In terms of domain architecture, G-patch spans 326–372 (TRGIGSKLLVRMGYEFGKGLGRNAEGRVEPIQAVVLPKGKSLDQCME). 2 disordered regions span residues 375-402 (QRKKAGGKHKHKTSKRRPKASGQGGGAK) and 500-524 (GLQQEERSLQREQKKADTHKKMTEF). Residues 376 to 393 (RKKAGGKHKHKTSKRRPK) show a composition bias toward basic residues.

It is found in the nucleus. In terms of biological role, transcription repressor that specifically binds the 5'-GGAG[GA]A[GA]A-3' consensus sequence. Represses transcription by recruiting the chromatin multiprotein complex NuRD to target promoters. Negatively regulates expression of EGFR, a gene involved in cell proliferation, survival and migration. The polypeptide is Zinc finger CCCH-type with G patch domain-containing protein (zgpat) (Xenopus laevis (African clawed frog)).